The following is a 658-amino-acid chain: MRSMDRFGIWVLAILLVIQSSFGFYLPGSYPHKYEVGDYLNVKVNSLTSIETEMPFSYYSLPFCKPSEGIKDSAENLGELLMGDRIENSPYRFRMFKNESEIFLCQTDKLSADSLKLLKKRIDEMYQVNPMLDNLPAIRYTKRDGYVLRWTGYPVGIKVQDVYYVFNHLKFKVLVHKYEEAANVARVMGTGDAAEVIPTIGKKDSDVPGYMVVGFEVVPCSFAHNGESTKKLKMYERYTTPIKCDSTRVSMSVKEGQSIVFSYEVSFEESDIKWPSRWDAYLKMEGSKVHWFSILNSLMVITFLAGIVLVIFLRTVRRDLTRYEELDKEAQAQMNEELSGWKLVVGDVFRAPSNASLLCVMVGDGVQILGMAVVTILFAALGFMSPASRGTLITGMLFFYMILGIAAGYVSVRLWRTIGCGEHRGWMSVAWKAACFFPGIAFLILTTLNFLLWGSHSTGAIPFSLFVILLLLWFCISVPLTLIGGYFGAKAPHIEFPVRTNQIPREIPAQKYPSWLLVLGAGTLPFGTLFIELFFIMSSIWMGRVYYVFGFLFVVLILLVVVCAEVSLVLTYMHLCVEDYKWWWKSFFASGSVAIYIFIYSINYLVFDLKSLSGPVSATLYLGYSLFMVLAIMLATGTVGFLSSFWFVHYLFSSVKLD.

An N-terminal signal peptide occupies residues 1 to 23 (MRSMDRFGIWVLAILLVIQSSFG). At 24–291 (FYLPGSYPHK…LKMEGSKVHW (268 aa)) the chain is on the lumenal side. A helical transmembrane segment spans residues 292–312 (FSILNSLMVITFLAGIVLVIF). Residues 313-364 (LRTVRRDLTRYEELDKEAQAQMNEELSGWKLVVGDVFRAPSNASLLCVMVGD) are Cytoplasmic-facing. A helical membrane pass occupies residues 365-385 (GVQILGMAVVTILFAALGFMS). The Lumenal portion of the chain corresponds to 386–391 (PASRGT). Residues 392–412 (LITGMLFFYMILGIAAGYVSV) form a helical membrane-spanning segment. Residues 413–432 (RLWRTIGCGEHRGWMSVAWK) lie on the Cytoplasmic side of the membrane. Residues 433–453 (AACFFPGIAFLILTTLNFLLW) form a helical membrane-spanning segment. Topologically, residues 454 to 462 (GSHSTGAIP) are lumenal. A helical transmembrane segment spans residues 463–483 (FSLFVILLLLWFCISVPLTLI). Residues 484–515 (GGYFGAKAPHIEFPVRTNQIPREIPAQKYPSW) lie on the Cytoplasmic side of the membrane. A helical membrane pass occupies residues 516 to 536 (LLVLGAGTLPFGTLFIELFFI). The Lumenal segment spans residues 537 to 547 (MSSIWMGRVYY). A helical membrane pass occupies residues 548 to 568 (VFGFLFVVLILLVVVCAEVSL). Over 569–586 (VLTYMHLCVEDYKWWWKS) the chain is Cytoplasmic. A helical transmembrane segment spans residues 587–607 (FFASGSVAIYIFIYSINYLVF). Residues 608-619 (DLKSLSGPVSAT) are Lumenal-facing. The chain crosses the membrane as a helical span at residues 620–640 (LYLGYSLFMVLAIMLATGTVG). The Cytoplasmic portion of the chain corresponds to 641-658 (FLSSFWFVHYLFSSVKLD). The short motif at 647 to 652 (FVHYLF) is the Endoplasmic reticulum export signal element. The Golgi retention signal motif lies at 656–658 (KLD).

Belongs to the nonaspanin (TM9SF) (TC 9.A.2) family.

It localises to the endosome membrane. The protein resides in the golgi apparatus membrane. In Arabidopsis thaliana (Mouse-ear cress), this protein is Transmembrane 9 superfamily member 11.